Here is a 292-residue protein sequence, read N- to C-terminus: Shikimate dehydrogenase (NADP(+)) (292 aa).

Residues 22 to 24 (SLS) and S69 contribute to the shikimate site. Catalysis depends on K73, which acts as the Proton acceptor. Shikimate is bound by residues N94 and D111. Residues 135–139 (GVGGA) and I236 contribute to the NADP(+) site. Y238 provides a ligand contact to shikimate. G260 serves as a coordination point for NADP(+).

The protein belongs to the shikimate dehydrogenase family. As to quaternary structure, homodimer.

It catalyses the reaction shikimate + NADP(+) = 3-dehydroshikimate + NADPH + H(+). It functions in the pathway metabolic intermediate biosynthesis; chorismate biosynthesis; chorismate from D-erythrose 4-phosphate and phosphoenolpyruvate: step 4/7. In terms of biological role, involved in the biosynthesis of the chorismate, which leads to the biosynthesis of aromatic amino acids. Catalyzes the reversible NADPH linked reduction of 3-dehydroshikimate (DHSA) to yield shikimate (SA). This chain is Shikimate dehydrogenase (NADP(+)), found in Streptococcus pyogenes serotype M2 (strain MGAS10270).